Here is a 742-residue protein sequence, read N- to C-terminus: Collectin-12 (742 aa).

At 1 to 37 the chain is on the cytoplasmic side; the sequence is MKDDFAEEEEVQSFGYKRFGIQEGTQCTKCKNNWALK. A helical; Signal-anchor for type II membrane protein transmembrane segment spans residues 38–58; the sequence is FSIILLYILCVLLTITIAILG. At 59–742 the chain is on the extracellular side; sequence YKVVEKMDNV…DMDKEQIFGV (684 aa). 2 coiled-coil regions span residues 71-101 and 271-334; these read GLET…GQKA and NNSA…QLEE. The disordered stretch occupies residues 439-605; the sequence is TILQGPPGPR…SEPTSVPEAN (167 aa). Collagen-like domains lie at 467-526 and 527-586; these read GQKG…SGDP and GPPG…PGPP. Pro residues predominate over residues 475–492; the sequence is PGPPGPAGEKGPPGPIGP. Composition is skewed to low complexity over residues 502–522 and 532–556; these read RGSP…LPGP and QGKD…VGEP. The segment covering 571-589 has biased composition (pro residues); sequence PGLPGPKGPPGPPGPPGPG. 3 disulfide bridges follow: cysteine 607-cysteine 618, cysteine 635-cysteine 730, and cysteine 708-cysteine 722. One can recognise a C-type lectin domain in the interval 614–731; it reads YTEKCYYFSI…CEDVNNFICE (118 aa). 5 residues coordinate Ca(2+): isoleucine 644, asparagine 646, glutamate 650, aspartate 670, and glutamate 674. A carbohydrate-binding residues include lysine 691, glutamine 694, and aspartate 696. Ca(2+) is bound by residues glutamine 694, aspartate 696, asparagine 697, glutamate 706, aspartate 707, asparagine 718, aspartate 719, and glutamate 731. Position 706 (glutamate 706) interacts with a carbohydrate. Asparagine 718 and aspartate 719 together coordinate a carbohydrate.

As to expression, widely expressed.

It localises to the membrane. Scavenger receptor that displays several functions associated with host defense. Binds to carbohydrates. The chain is Collectin-12 (COLEC12) from Gallus gallus (Chicken).